The primary structure comprises 463 residues: Cysteine--tRNA ligase (463 aa).

A Zn(2+)-binding site is contributed by Cys28. Residues 30 to 40 carry the 'HIGH' region motif; sequence VTIYDLCHIGH. 3 residues coordinate Zn(2+): Cys209, His234, and Glu238. The 'KMSKS' region signature appears at 266–270; the sequence is KMSKS. Lys269 lines the ATP pocket.

Belongs to the class-I aminoacyl-tRNA synthetase family. Monomer. Zn(2+) serves as cofactor.

Its subcellular location is the cytoplasm. The enzyme catalyses tRNA(Cys) + L-cysteine + ATP = L-cysteinyl-tRNA(Cys) + AMP + diphosphate. This is Cysteine--tRNA ligase from Tolumonas auensis (strain DSM 9187 / NBRC 110442 / TA 4).